Consider the following 227-residue polypeptide: MLLTLPDILSPQDLQAARQLLIDAPWADGRDSAGAQARQVKNNAQLPHDCEAARAIGTMVVGGLERSALFLTAALPKKIFTPRINRYSGAANHYGNHVDSAIRTMAGSGQRVRTDVSCTVFLSEPDDYEGGELTIADTYGEQRIKLPAGHAVLYPGTSLHQVQPVTRGQRLACFFWVESLVRGNEQRRLLFDMDMALMQLRQEHGESQATVALTGAYHNLLRMWADT.

One can recognise a Fe2OG dioxygenase domain in the interval 78–179; it reads KIFTPRINRY…RLACFFWVES (102 aa). The Fe cation site is built by histidine 97, aspartate 99, and histidine 160. Position 170 (arginine 170) interacts with 2-oxoglutarate.

The cofactor is Fe(2+). Requires L-ascorbate as cofactor.

The sequence is that of PKHD-type hydroxylase Bpro_3048 from Polaromonas sp. (strain JS666 / ATCC BAA-500).